A 152-amino-acid chain; its full sequence is 3-dehydroquinate dehydratase (152 aa).

Residue Tyr-26 is the Proton acceptor of the active site. 3 residues coordinate substrate: Asn-78, His-84, and Asp-91. His-104 functions as the Proton donor in the catalytic mechanism. Substrate-binding positions include 105–106 and Arg-115; that span reads IS.

It belongs to the type-II 3-dehydroquinase family. Homododecamer.

The enzyme catalyses 3-dehydroquinate = 3-dehydroshikimate + H2O. It participates in metabolic intermediate biosynthesis; chorismate biosynthesis; chorismate from D-erythrose 4-phosphate and phosphoenolpyruvate: step 3/7. In terms of biological role, catalyzes a trans-dehydration via an enolate intermediate. This Buchnera aphidicola subsp. Cinara cedri (strain Cc) protein is 3-dehydroquinate dehydratase.